The following is a 238-amino-acid chain: Membrane protein 2 (238 aa).

This sequence belongs to the varicellovirus ORF2 protein family. In terms of processing, phosphorylated by host.

The protein localises to the host membrane. This Varicella-zoster virus (strain Dumas) (HHV-3) protein is Membrane protein 2.